The following is a 133-amino-acid chain: Small ribosomal subunit protein uS8 (133 aa).

It belongs to the universal ribosomal protein uS8 family. Part of the 30S ribosomal subunit. Contacts proteins S5 and S12.

One of the primary rRNA binding proteins, it binds directly to 16S rRNA central domain where it helps coordinate assembly of the platform of the 30S subunit. This is Small ribosomal subunit protein uS8 from Acaryochloris marina (strain MBIC 11017).